Reading from the N-terminus, the 298-residue chain is Acetylglutamate kinase (298 aa).

Substrate is bound by residues 69–70, arginine 91, and asparagine 196; that span reads GG.

It belongs to the acetylglutamate kinase family. ArgB subfamily.

It localises to the cytoplasm. The catalysed reaction is N-acetyl-L-glutamate + ATP = N-acetyl-L-glutamyl 5-phosphate + ADP. It functions in the pathway amino-acid biosynthesis; L-arginine biosynthesis; N(2)-acetyl-L-ornithine from L-glutamate: step 2/4. Its function is as follows. Catalyzes the ATP-dependent phosphorylation of N-acetyl-L-glutamate. The chain is Acetylglutamate kinase from Nitrobacter hamburgensis (strain DSM 10229 / NCIMB 13809 / X14).